Reading from the N-terminus, the 236-residue chain is MGQKINPIGLRLGINRTWDSRWFAGKAEYGKLLHEDVKIREILHKELKQAAVARIVIERPHKKCRVTIHSARPGVVIGKKGADIDKLRKRVADITSSDVVINIVEIRKPELDATLVAESIAQQLERRVAFRRAMKRAVQSAMRLGAEGIRINCSGRLGGAEIARMEWYREGRVPLHTLRADIDYGVATAFTTFGTCGVKVWIFKGEILEHDPMAQDKRMNEGGGESPSPRSRRDAA.

The KH type-2 domain occupies 39-107 (IREILHKELK…DVVINIVEIR (69 aa)). The segment at 213–236 (MAQDKRMNEGGGESPSPRSRRDAA) is disordered.

This sequence belongs to the universal ribosomal protein uS3 family. Part of the 30S ribosomal subunit. Forms a tight complex with proteins S10 and S14.

In terms of biological role, binds the lower part of the 30S subunit head. Binds mRNA in the 70S ribosome, positioning it for translation. This chain is Small ribosomal subunit protein uS3, found in Bradyrhizobium sp. (strain ORS 278).